Here is a 548-residue protein sequence, read N- to C-terminus: Eukaryotic translation initiation factor 3 subunit D (548 aa).

Lys53 carries the post-translational modification N6-acetyllysine. Ser161 is modified (phosphoserine). The RNA gate stretch occupies residues 285 to 299 (DFDLLTVSETANEPP). The interval 523 to 548 (PDGTFSSDEDDEEEEEEEEEEEEEEA) is disordered. Ser528 and Ser529 each carry phosphoserine. Residues 529–548 (SDEDDEEEEEEEEEEEEEEA) are compositionally biased toward acidic residues.

Belongs to the eIF-3 subunit D family. Component of the eukaryotic translation initiation factor 3 (eIF-3) complex, which is composed of 13 subunits: EIF3A, EIF3B, EIF3C, EIF3D, EIF3E, EIF3F, EIF3G, EIF3H, EIF3I, EIF3J, EIF3K, EIF3L and EIF3M. The eIF-3 complex appears to include 3 stable modules: module A is composed of EIF3A, EIF3B, EIF3G and EIF3I; module B is composed of EIF3F, EIF3H, and EIF3M; and module C is composed of EIF3C, EIF3D, EIF3E, EIF3K and EIF3L. EIF3C of module C binds EIF3B of module A and EIF3H of module B, thereby linking the three modules. EIF3J is a labile subunit that binds to the eIF-3 complex via EIF3B. The eIF-3 complex interacts with RPS6KB1 under conditions of nutrient depletion. Mitogenic stimulation leads to binding and activation of a complex composed of MTOR and RPTOR, leading to phosphorylation and release of RPS6KB1 and binding of EIF4B to eIF-3.

It is found in the cytoplasm. MRNA cap-binding component of the eukaryotic translation initiation factor 3 (eIF-3) complex, a complex required for several steps in the initiation of protein synthesis of a specialized repertoire of mRNAs. The eIF-3 complex associates with the 40S ribosome and facilitates the recruitment of eIF-1, eIF-1A, eIF-2:GTP:methionyl-tRNAi and eIF-5 to form the 43S pre-initiation complex (43S PIC). The eIF-3 complex stimulates mRNA recruitment to the 43S PIC and scanning of the mRNA for AUG recognition. The eIF-3 complex is also required for disassembly and recycling of post-termination ribosomal complexes and subsequently prevents premature joining of the 40S and 60S ribosomal subunits prior to initiation. The eIF-3 complex specifically targets and initiates translation of a subset of mRNAs involved in cell proliferation, including cell cycling, differentiation and apoptosis, and uses different modes of RNA stem-loop binding to exert either translational activation or repression. In the eIF-3 complex, EIF3D specifically recognizes and binds the 7-methylguanosine cap of a subset of mRNAs. The protein is Eukaryotic translation initiation factor 3 subunit D of Bos taurus (Bovine).